The primary structure comprises 425 residues: Glutamate-1-semialdehyde 2,1-aminomutase (425 aa).

Lys264 is subject to N6-(pyridoxal phosphate)lysine.

Belongs to the class-III pyridoxal-phosphate-dependent aminotransferase family. HemL subfamily. Homodimer. The cofactor is pyridoxal 5'-phosphate.

It localises to the cytoplasm. The catalysed reaction is (S)-4-amino-5-oxopentanoate = 5-aminolevulinate. It participates in porphyrin-containing compound metabolism; protoporphyrin-IX biosynthesis; 5-aminolevulinate from L-glutamyl-tRNA(Glu): step 2/2. This is Glutamate-1-semialdehyde 2,1-aminomutase from Leptospira biflexa serovar Patoc (strain Patoc 1 / Ames).